The chain runs to 289 residues: uncharacterized protein (289 aa).

The active site involves glutamate 48.

The protein belongs to the PhzF family.

This is an uncharacterized protein from Pasteurella multocida (strain Pm70).